We begin with the raw amino-acid sequence, 260 residues long: Ribonuclease HII (260 aa).

Residues 71–259 (ELVAGVDEVG…VHDAIVNKKN (189 aa)) form the RNase H type-2 domain. Residues Asp77, Glu78, and Asp169 each contribute to the a divalent metal cation site.

The protein belongs to the RNase HII family. Requires Mn(2+) as cofactor. Mg(2+) serves as cofactor.

It localises to the cytoplasm. The enzyme catalyses Endonucleolytic cleavage to 5'-phosphomonoester.. Endonuclease that specifically degrades the RNA of RNA-DNA hybrids. The polypeptide is Ribonuclease HII (Leuconostoc citreum (strain KM20)).